Reading from the N-terminus, the 262-residue chain is Acyl-[acyl-carrier-protein]--UDP-N-acetylglucosamine O-acyltransferase (262 aa).

The protein belongs to the transferase hexapeptide repeat family. LpxA subfamily. As to quaternary structure, homotrimer.

The protein localises to the cytoplasm. It catalyses the reaction a (3R)-hydroxyacyl-[ACP] + UDP-N-acetyl-alpha-D-glucosamine = a UDP-3-O-[(3R)-3-hydroxyacyl]-N-acetyl-alpha-D-glucosamine + holo-[ACP]. Its pathway is glycolipid biosynthesis; lipid IV(A) biosynthesis; lipid IV(A) from (3R)-3-hydroxytetradecanoyl-[acyl-carrier-protein] and UDP-N-acetyl-alpha-D-glucosamine: step 1/6. Functionally, involved in the biosynthesis of lipid A, a phosphorylated glycolipid that anchors the lipopolysaccharide to the outer membrane of the cell. The chain is Acyl-[acyl-carrier-protein]--UDP-N-acetylglucosamine O-acyltransferase from Burkholderia lata (strain ATCC 17760 / DSM 23089 / LMG 22485 / NCIMB 9086 / R18194 / 383).